Reading from the N-terminus, the 391-residue chain is Cyclin-A1 (391 aa).

Belongs to the cyclin family. Cyclin AB subfamily. In terms of assembly, interacts with the CDK1 and the CDK2 protein kinases to form a serine/threonine kinase holoenzyme complex. The cyclin subunit imparts substrate specificity to the complex.

The protein localises to the nucleus. Functionally, may be involved in the control of the cell cycle at the G1/S (start) and G2/M (mitosis) transitions. The chain is Cyclin-A1 (ccna1) from Carassius auratus (Goldfish).